The sequence spans 491 residues: Katanin p60 ATPase-containing subunit A1 (491 aa).

The interval 1 to 29 is interaction with KATNB1; it reads MSLLMISENVKLAREYALLGNYDSAMVYY. Residues 1-75 are interaction with dynein and NDEL1; the sequence is MSLLMISENV…VKDIMKTLES (75 aa). An interaction with microtubules region spans residues 1–185; sequence MSLLMISENV…EPETNKFDST (185 aa). Phosphoserine; by DYRK2 occurs at positions 42 and 109. The tract at residues 87–185 is disordered; sequence QHDLPASEGE…EPETNKFDST (99 aa). Thr-133 is subject to Phosphothreonine; by DYRK2. The segment covering 145-169 has biased composition (basic and acidic residues); sequence HNDRGKAVRCREKKEQNKGREEKNK. Position 170 is a phosphoserine (Ser-170). 249 to 256 serves as a coordination point for ATP; it reads GPPGTGKT.

It belongs to the AAA ATPase family. Katanin p60 subunit A1 subfamily. Can homooligomerize into hexameric rings, which may be promoted by interaction with microtubules. Interacts with KATNB1, which may serve as a targeting subunit. Interacts with ASPM; the katanin complex formation KATNA1:KATNB1 is required for the association of ASPM Interacts with dynein and NDEL1. Associates with the E3 ligase complex containing DYRK2, EDD/UBR5, DDB1 and DCAF1 proteins (EDVP complex). Interacts with KLHL42 (via the kelch domains). Interacts with CUL3; the interaction is enhanced by KLHL42. Interacts with KATNB1 and KATNBL1. Interacts with CAMSAP2 and CAMSAP3; leading to regulate the length of CAMSAP-decorated microtubule stretches. In terms of processing, phosphorylation by DYRK2 triggers ubiquitination and subsequent degradation. Post-translationally, ubiquitinated by the BCR(KLHL42) E3 ubiquitin ligase complex, leading to its proteasomal degradation. Ubiquitinated by the EDVP E3 ligase complex and subsequently targeted for proteasomal degradation.

The protein localises to the cytoplasm. It is found in the midbody. Its subcellular location is the cytoskeleton. It localises to the microtubule organizing center. The protein resides in the centrosome. The protein localises to the spindle pole. It is found in the spindle. It carries out the reaction n ATP + n H2O + a microtubule = n ADP + n phosphate + (n+1) alpha/beta tubulin heterodimers.. Its activity is regulated as follows. ATPase activity is stimulated by microtubules, which promote homooligomerization. ATP-dependent microtubule severing is stimulated by interaction with KATNB1. In terms of biological role, catalytic subunit of a complex which severs microtubules in an ATP-dependent manner. Microtubule severing may promote rapid reorganization of cellular microtubule arrays and the release of microtubules from the centrosome following nucleation. Microtubule release from the mitotic spindle poles may allow depolymerization of the microtubule end proximal to the spindle pole, leading to poleward microtubule flux and poleward motion of chromosome. Microtubule release within the cell body of neurons may be required for their transport into neuronal processes by microtubule-dependent motor proteins. This transport is required for axonal growth. In Macaca fascicularis (Crab-eating macaque), this protein is Katanin p60 ATPase-containing subunit A1.